A 1093-amino-acid polypeptide reads, in one-letter code: ATP-dependent helicase/deoxyribonuclease subunit B (1093 aa).

Belongs to the helicase family. AddB/RexB type 2 subfamily. Heterodimer of AddA and RexB. The cofactor is Mg(2+).

Its function is as follows. The heterodimer acts as both an ATP-dependent DNA helicase and an ATP-dependent, dual-direction single-stranded exonuclease. Recognizes the chi site generating a DNA molecule suitable for the initiation of homologous recombination. This subunit has 5' -&gt; 3' nuclease activity but not helicase activity. In Streptococcus sanguinis (strain SK36), this protein is ATP-dependent helicase/deoxyribonuclease subunit B.